Consider the following 106-residue polypeptide: Toxin-like structure LSTX-D4 (106 aa).

Positions 1 to 20 are cleaved as a signal peptide; the sequence is MMKVLVVVALLVTLISYSSS. A propeptide spanning residues 21 to 41 is cleaved from the precursor; it reads EGIGDLEADELLSLMANEQTR. Disulfide bonds link cysteine 45–cysteine 60, cysteine 52–cysteine 69, cysteine 59–cysteine 85, and cysteine 71–cysteine 83.

It belongs to the neurotoxin 19 (CSTX) family. 02 (D7) subfamily. As to expression, expressed by the venom gland.

The protein resides in the secreted. In Lycosa singoriensis (Wolf spider), this protein is Toxin-like structure LSTX-D4.